The sequence spans 358 residues: Mesaconyl-CoA hydratase (358 aa).

The 105-residue stretch at 44–148 (AHDPGLRLTH…TSSSRPQYGI (105 aa)) folds into the MaoC-like domain.

Belongs to the enoyl-CoA hydratase/isomerase family.

The enzyme catalyses (2R,3S)-beta-methylmalyl-CoA = 2-methylfumaryl-CoA + H2O. Functionally, involved in the methylaspartate cycle. Catalyzes the reversible hydration of mesaconyl-CoA (2-methylfumaryl-CoA) to yield beta-methylmalyl-CoA ((2R,3S)-beta-methylmalyl-CoA). The protein is Mesaconyl-CoA hydratase of Haloarcula marismortui (strain ATCC 43049 / DSM 3752 / JCM 8966 / VKM B-1809) (Halobacterium marismortui).